The following is a 314-amino-acid chain: A-kinase anchor protein 7 isoform gamma (314 aa).

The disordered stretch occupies residues 1-46 (MPFAAVDIQDDCGSPDVPQANPKRSKEEEEDRGDKNDHVKKRKKAK). The span at 24–37 (RSKEEEEDRGDKND) shows a compositional bias: basic and acidic residues. AMP contacts are provided by residues threonine 95 and 185–187 (HLT). CMP-binding positions include threonine 95 and 185-187 (HLT). The PKA-RII-alpha subunit binding domain stretch occupies residues 260–314 (AELVRLSKRLVENAVLKAVQQYLEETQNKKQPGEGNSTKAEEGDRNGDGSDNNRK). The segment at 261–285 (ELVRLSKRLVENAVLKAVQQYLEET) is RI-alpha-binding. Residues 262–275 (LVRLSKRLVENAVL) are RII-binding. The segment at 281 to 314 (YLEETQNKKQPGEGNSTKAEEGDRNGDGSDNNRK) is disordered. The span at 298-314 (KAEEGDRNGDGSDNNRK) shows a compositional bias: basic and acidic residues.

In terms of assembly, binds cAMP-dependent protein kinase (PKA). Interacts with PRKCA; only the cytoplasmic form is capable of interacting with PRKCA. In terms of tissue distribution, expressed in oocytes.

The protein localises to the nucleus. It is found in the cytoplasm. In terms of biological role, probably targets cAMP-dependent protein kinase (PKA) to the cellular membrane or cytoskeletal structures. The membrane-associated form reduces epithelial sodium channel (ENaC) activity, whereas the free cytoplasmic form may negatively regulate ENaC channel feedback inhibition by intracellular sodium. The chain is A-kinase anchor protein 7 isoform gamma from Mus musculus (Mouse).